The sequence spans 376 residues: Cytoplasmic tRNA 2-thiolation protein 2 (376 aa).

It belongs to the CTU2/NCS2 family.

It localises to the cytoplasm. It functions in the pathway tRNA modification; 5-methoxycarbonylmethyl-2-thiouridine-tRNA biosynthesis. In terms of biological role, plays a central role in 2-thiolation of mcm(5)S(2)U at tRNA wobble positions of tRNA(Lys), tRNA(Glu) and tRNA(Gln). May act by forming a heterodimer with NCS6 that ligates sulfur from thiocarboxylated URM1 onto the uridine of tRNAs at wobble position. Prior mcm(5) tRNA modification by the elongator complex is required for 2-thiolation. May also be involved in protein urmylation. The sequence is that of Cytoplasmic tRNA 2-thiolation protein 2 from Coccidioides immitis (strain RS) (Valley fever fungus).